Here is a 431-residue protein sequence, read N- to C-terminus: DNA polymerase delta subunit 3 (431 aa).

A necessary for function, possibly resulting from its inability to interact with PolD2 region spans residues 64 to 80 (QGSDSGEDLYSVVLESR). The disordered stretch occupies residues 128 to 431 (PGAGKIVPSA…AGIMNFFSKK (304 aa)). Over residues 156 to 171 (SKSAVKLEPSKSSLKS) the composition is skewed to low complexity. Composition is skewed to basic and acidic residues over residues 172-200 (EPAK…EQAS) and 252-271 (SPPE…NKKE). The segment covering 278-290 (PSPTKKPTTANTS) has biased composition (low complexity). The segment covering 294–307 (FDEESAESSDEEEK) has biased composition (acidic residues). Composition is skewed to basic and acidic residues over residues 308–328 (LDML…EKAS) and 343–362 (QPPK…KMDT). Low complexity predominate over residues 387–411 (PANKKVSPKAAAPVNKKKSPPSAAK).

As to quaternary structure, component of both the DNA polymerase delta and DNA polymerase zeta complexes. The DNA polymerase delta complex consists of three subunits: the catalytic subunit PolD1 and two accessory subunits PolD2/Pol31 and PolD3/Pol32. Within the delta complex, interacts with both PolD1 and PolD2. Component of the DNA polymerase zeta complex consisting of four subunits: the catalytic subunit PolZ1 and three accessory subunits PolZ2/Rev7, PolD2/Pol31 and PolD3/Pol32. In terms of tissue distribution, expressed in ovaries (at the protein level). Expressed in ovaries.

The protein localises to the nucleus. Its subcellular location is the nucleoplasm. In terms of biological role, accessory component of the DNA polymerase delta complex and possibly the DNA polymerase zeta complex. As a component of the delta complex, participates in high fidelity genome replication, including lagging strand synthesis, DNA recombination and repair. Required to recruit the DNA polymerase delta complex to the nucleus of rapidly dividing embryonic cells, and as a consequence is essential for genome replication during the earliest cell cycles. Increases the efficiency and processivity of DNA synthesis of the DNA polymerases during mitotic DNA replication and repair. During development this function is essential for preventing replication stress that results in the formation of chromosomal fragile sites (CFS) such as chromosomal breaks. Ensures genomic stability by promoting several types of DNA repair mechanisms including repairing broken dicentric chromosomes through homolog-dependent break-induced replication (BIR). During homologous recombination (HR) repair, required for maintaining the processivity of the delta complex during break-induced replication; a form of HR that requires extensive DNA synthesis such as the repair of large gaps. Able to suppress position effect variegation and may therefore have a role in the induction of chromatin state changes that likely include its activities in DNA replication and repair. In Drosophila melanogaster (Fruit fly), this protein is DNA polymerase delta subunit 3.